Here is an 843-residue protein sequence, read N- to C-terminus: Protein P (843 aa).

The segment at 1 to 177 (MPLSYQHFRK…FCGSPYSWEQ (177 aa)) is terminal protein domain (TP). A spacer region spans residues 178-346 (ELQHGRLVLQ…HCLFHIVNLI (169 aa)). Disordered regions lie at residues 221–240 (SRLG…QGGS) and 289–315 (VSTS…SRSQ). Over residues 223 to 235 (LGPQPTQGQLAGL) the composition is skewed to low complexity. A polymerase/reverse transcriptase domain (RT) region spans residues 347 to 690 (DDWGPCAEHG…YLNLYPVARQ (344 aa)). In terms of domain architecture, Reverse transcriptase spans 357 to 600 (EHRIRTPRTP…YSLNFMGYVI (244 aa)). Residues aspartate 429, aspartate 551, and aspartate 552 each contribute to the Mg(2+) site.

The protein belongs to the hepadnaviridae P protein family.

The catalysed reaction is DNA(n) + a 2'-deoxyribonucleoside 5'-triphosphate = DNA(n+1) + diphosphate. It carries out the reaction Endonucleolytic cleavage to 5'-phosphomonoester.. Activated by host HSP70 and HSP40 in vitro to be able to bind the epsilon loop of the pgRNA. Because deletion of the RNase H region renders the protein partly chaperone-independent, the chaperones may be needed indirectly to relieve occlusion of the RNA-binding site by this domain. Inhibited by several reverse-transcriptase inhibitors: Lamivudine, Adefovir and Entecavir. In terms of biological role, multifunctional enzyme that converts the viral RNA genome into dsDNA in viral cytoplasmic capsids. This enzyme displays a DNA polymerase activity that can copy either DNA or RNA templates, and a ribonuclease H (RNase H) activity that cleaves the RNA strand of RNA-DNA heteroduplexes in a partially processive 3'- to 5'-endonucleasic mode. Neo-synthesized pregenomic RNA (pgRNA) are encapsidated together with the P protein, and reverse-transcribed inside the nucleocapsid. Initiation of reverse-transcription occurs first by binding the epsilon loop on the pgRNA genome, and is initiated by protein priming, thereby the 5'-end of (-)DNA is covalently linked to P protein. Partial (+)DNA is synthesized from the (-)DNA template and generates the relaxed circular DNA (RC-DNA) genome. After budding and infection, the RC-DNA migrates in the nucleus, and is converted into a plasmid-like covalently closed circular DNA (cccDNA). The activity of P protein does not seem to be necessary for cccDNA generation, and is presumably released from (+)DNA by host nuclear DNA repair machinery. This is Protein P from Homo sapiens (Human).